Here is a 489-residue protein sequence, read N- to C-terminus: Zeta-carotene desaturase (489 aa).

This sequence belongs to the zeta carotene desaturase family. NAD(+) serves as cofactor. The cofactor is NADP(+). FAD is required as a cofactor.

The enzyme catalyses 9,9'-di-cis-zeta-carotene + 2 a quinone = 7,7',9,9'-tetra-cis-lycopene + 2 a quinol. It participates in carotenoid biosynthesis; lycopene biosynthesis. In terms of biological role, catalyzes the conversion of zeta-carotene to lycopene via the intermediary of neurosporene. It carries out two consecutive desaturations (introduction of double bonds) at positions C-7 and C-7'. The chain is Zeta-carotene desaturase (crtQ) from Synechocystis sp. (strain ATCC 27184 / PCC 6803 / Kazusa).